The sequence spans 102 residues: Small ribosomal subunit protein uS10 (102 aa).

It belongs to the universal ribosomal protein uS10 family. In terms of assembly, part of the 30S ribosomal subunit.

In terms of biological role, involved in the binding of tRNA to the ribosomes. This Streptococcus pneumoniae (strain Taiwan19F-14) protein is Small ribosomal subunit protein uS10.